A 488-amino-acid chain; its full sequence is Glycogen synthase (488 aa).

R20 is a binding site for ADP-alpha-D-glucose.

This sequence belongs to the glycosyltransferase 1 family. Bacterial/plant glycogen synthase subfamily.

It carries out the reaction [(1-&gt;4)-alpha-D-glucosyl](n) + ADP-alpha-D-glucose = [(1-&gt;4)-alpha-D-glucosyl](n+1) + ADP + H(+). It participates in glycan biosynthesis; glycogen biosynthesis. In terms of biological role, synthesizes alpha-1,4-glucan chains using ADP-glucose. The protein is Glycogen synthase of Chlorobaculum tepidum (strain ATCC 49652 / DSM 12025 / NBRC 103806 / TLS) (Chlorobium tepidum).